The primary structure comprises 209 residues: ATP phosphoribosyltransferase (209 aa).

This sequence belongs to the ATP phosphoribosyltransferase family. Short subfamily. As to quaternary structure, heteromultimer composed of HisG and HisZ subunits.

It localises to the cytoplasm. The catalysed reaction is 1-(5-phospho-beta-D-ribosyl)-ATP + diphosphate = 5-phospho-alpha-D-ribose 1-diphosphate + ATP. It functions in the pathway amino-acid biosynthesis; L-histidine biosynthesis; L-histidine from 5-phospho-alpha-D-ribose 1-diphosphate: step 1/9. Functionally, catalyzes the condensation of ATP and 5-phosphoribose 1-diphosphate to form N'-(5'-phosphoribosyl)-ATP (PR-ATP). Has a crucial role in the pathway because the rate of histidine biosynthesis seems to be controlled primarily by regulation of HisG enzymatic activity. The polypeptide is ATP phosphoribosyltransferase (Caldicellulosiruptor bescii (strain ATCC BAA-1888 / DSM 6725 / KCTC 15123 / Z-1320) (Anaerocellum thermophilum)).